A 663-amino-acid polypeptide reads, in one-letter code: DNA ligase 1 (663 aa).

Residues Asp28–Asp32 and Ser76–Leu77 each bind NAD(+). Lys118 functions as the N6-AMP-lysine intermediate in the catalytic mechanism. Positions 139, 173, and 310 each coordinate NAD(+). Positions 403, 406, 419, and 425 each coordinate Zn(2+). In terms of domain architecture, BRCT spans Val583–Lys663.

It belongs to the NAD-dependent DNA ligase family. LigA subfamily. The cofactor is Mg(2+). Mn(2+) serves as cofactor.

The catalysed reaction is NAD(+) + (deoxyribonucleotide)n-3'-hydroxyl + 5'-phospho-(deoxyribonucleotide)m = (deoxyribonucleotide)n+m + AMP + beta-nicotinamide D-nucleotide.. Its function is as follows. DNA ligase that catalyzes the formation of phosphodiester linkages between 5'-phosphoryl and 3'-hydroxyl groups in double-stranded DNA using NAD as a coenzyme and as the energy source for the reaction. It is essential for DNA replication and repair of damaged DNA. This is DNA ligase 1 from Clostridium acetobutylicum (strain ATCC 824 / DSM 792 / JCM 1419 / IAM 19013 / LMG 5710 / NBRC 13948 / NRRL B-527 / VKM B-1787 / 2291 / W).